Reading from the N-terminus, the 236-residue chain is tRNA (guanine-N(1)-)-methyltransferase (236 aa).

S-adenosyl-L-methionine contacts are provided by residues Gly110 and 129–134 (LGDFVL).

It belongs to the RNA methyltransferase TrmD family. As to quaternary structure, homodimer.

Its subcellular location is the cytoplasm. The catalysed reaction is guanosine(37) in tRNA + S-adenosyl-L-methionine = N(1)-methylguanosine(37) in tRNA + S-adenosyl-L-homocysteine + H(+). Its function is as follows. Specifically methylates guanosine-37 in various tRNAs. This chain is tRNA (guanine-N(1)-)-methyltransferase, found in Clostridium perfringens (strain ATCC 13124 / DSM 756 / JCM 1290 / NCIMB 6125 / NCTC 8237 / Type A).